We begin with the raw amino-acid sequence, 333 residues long: Biotin synthase (333 aa).

Residues 54-283 (FCSNTFDMCS…RAFIRLAGGR (230 aa)) enclose the Radical SAM core domain. Residues Cys72, Cys76, and Cys79 each contribute to the [4Fe-4S] cluster site. Ser116, Cys148, Cys208, and Arg278 together coordinate [2Fe-2S] cluster.

This sequence belongs to the radical SAM superfamily. Biotin synthase family. Homodimer. [4Fe-4S] cluster is required as a cofactor. [2Fe-2S] cluster serves as cofactor.

The catalysed reaction is (4R,5S)-dethiobiotin + (sulfur carrier)-SH + 2 reduced [2Fe-2S]-[ferredoxin] + 2 S-adenosyl-L-methionine = (sulfur carrier)-H + biotin + 2 5'-deoxyadenosine + 2 L-methionine + 2 oxidized [2Fe-2S]-[ferredoxin]. Its pathway is cofactor biosynthesis; biotin biosynthesis; biotin from 7,8-diaminononanoate: step 2/2. Functionally, catalyzes the conversion of dethiobiotin (DTB) to biotin by the insertion of a sulfur atom into dethiobiotin via a radical-based mechanism. This is Biotin synthase from Brachyspira hyodysenteriae (strain ATCC 49526 / WA1).